Reading from the N-terminus, the 428-residue chain is 3-phosphoshikimate 1-carboxyvinyltransferase (428 aa).

3-phosphoshikimate is bound by residues Lys-23, Ser-24, and Arg-28. Lys-23 lines the phosphoenolpyruvate pocket. 2 residues coordinate phosphoenolpyruvate: Gly-97 and Arg-125. The 3-phosphoshikimate site is built by Ser-170, Ser-171, Gln-172, Ser-198, Asp-314, Asn-337, and Lys-341. Residue Gln-172 coordinates phosphoenolpyruvate. The active-site Proton acceptor is the Asp-314. Arg-345, Arg-387, and Lys-412 together coordinate phosphoenolpyruvate.

The protein belongs to the EPSP synthase family. Monomer.

The protein localises to the cytoplasm. It carries out the reaction 3-phosphoshikimate + phosphoenolpyruvate = 5-O-(1-carboxyvinyl)-3-phosphoshikimate + phosphate. Its pathway is metabolic intermediate biosynthesis; chorismate biosynthesis; chorismate from D-erythrose 4-phosphate and phosphoenolpyruvate: step 6/7. Its function is as follows. Catalyzes the transfer of the enolpyruvyl moiety of phosphoenolpyruvate (PEP) to the 5-hydroxyl of shikimate-3-phosphate (S3P) to produce enolpyruvyl shikimate-3-phosphate and inorganic phosphate. In Serratia proteamaculans (strain 568), this protein is 3-phosphoshikimate 1-carboxyvinyltransferase.